The chain runs to 292 residues: Ribosomal protein L11 methyltransferase (292 aa).

S-adenosyl-L-methionine-binding residues include Thr-145, Gly-166, Asp-188, and Asn-229.

This sequence belongs to the methyltransferase superfamily. PrmA family.

It is found in the cytoplasm. It carries out the reaction L-lysyl-[protein] + 3 S-adenosyl-L-methionine = N(6),N(6),N(6)-trimethyl-L-lysyl-[protein] + 3 S-adenosyl-L-homocysteine + 3 H(+). Its function is as follows. Methylates ribosomal protein L11. This chain is Ribosomal protein L11 methyltransferase, found in Nitrosococcus oceani (strain ATCC 19707 / BCRC 17464 / JCM 30415 / NCIMB 11848 / C-107).